A 211-amino-acid chain; its full sequence is Holliday junction resolvase RecU (211 aa).

Mg(2+) contacts are provided by Thr-87, Asp-89, Asp-102, and Gln-121.

The protein belongs to the RecU family. The cofactor is Mg(2+).

It localises to the cytoplasm. It catalyses the reaction Endonucleolytic cleavage at a junction such as a reciprocal single-stranded crossover between two homologous DNA duplexes (Holliday junction).. Its function is as follows. Endonuclease that resolves Holliday junction intermediates in genetic recombination. Cleaves mobile four-strand junctions by introducing symmetrical nicks in paired strands. Promotes annealing of linear ssDNA with homologous dsDNA. Required for DNA repair, homologous recombination and chromosome segregation. The sequence is that of Holliday junction resolvase RecU from Limosilactobacillus fermentum (strain NBRC 3956 / LMG 18251) (Lactobacillus fermentum).